The primary structure comprises 153 residues: MSSVSAAGATPPASPGCIAGIGMDLLRIERIERALARHGDRFAQKILGPEELAKFHARRRRDPARGVRFLATRFAAKEAFSKAIGLGMRMPMSWRRVQTLNALGGRPVLVIGAELADWFDARFGAAHVSITDESDMAAAYVIVERKPAPDGRP.

Mg(2+)-binding residues include D24 and E78.

The protein belongs to the P-Pant transferase superfamily. AcpS family. The cofactor is Mg(2+).

It is found in the cytoplasm. The enzyme catalyses apo-[ACP] + CoA = holo-[ACP] + adenosine 3',5'-bisphosphate + H(+). In terms of biological role, transfers the 4'-phosphopantetheine moiety from coenzyme A to a Ser of acyl-carrier-protein. In Bordetella parapertussis (strain 12822 / ATCC BAA-587 / NCTC 13253), this protein is Holo-[acyl-carrier-protein] synthase.